The chain runs to 213 residues: Cytidylate kinase (213 aa).

Position 7–15 (7–15 (GPAASGKGT)) interacts with ATP.

Belongs to the cytidylate kinase family. Type 1 subfamily.

It is found in the cytoplasm. It catalyses the reaction CMP + ATP = CDP + ADP. The enzyme catalyses dCMP + ATP = dCDP + ADP. In Rhodospirillum rubrum (strain ATCC 11170 / ATH 1.1.1 / DSM 467 / LMG 4362 / NCIMB 8255 / S1), this protein is Cytidylate kinase.